The sequence spans 340 residues: tRNA N6-adenosine threonylcarbamoyltransferase (340 aa).

Fe cation-binding residues include histidine 109 and histidine 113. Residues 132–136, aspartate 165, glycine 178, and asparagine 277 each bind substrate; that span reads AISGA. Aspartate 302 serves as a coordination point for Fe cation.

It belongs to the KAE1 / TsaD family. It depends on Fe(2+) as a cofactor.

The protein localises to the cytoplasm. The enzyme catalyses L-threonylcarbamoyladenylate + adenosine(37) in tRNA = N(6)-L-threonylcarbamoyladenosine(37) in tRNA + AMP + H(+). Functionally, required for the formation of a threonylcarbamoyl group on adenosine at position 37 (t(6)A37) in tRNAs that read codons beginning with adenine. Is involved in the transfer of the threonylcarbamoyl moiety of threonylcarbamoyl-AMP (TC-AMP) to the N6 group of A37, together with TsaE and TsaB. TsaD likely plays a direct catalytic role in this reaction. The protein is tRNA N6-adenosine threonylcarbamoyltransferase of Chlamydia muridarum (strain MoPn / Nigg).